A 353-amino-acid polypeptide reads, in one-letter code: Ion-translocating oxidoreductase complex subunit D (353 aa).

4 helical membrane-spanning segments follow: residues 20–40 (IMLL…YYFG), 44–64 (IIQV…ILHL), 77–108 (SALL…AIII), and 123–143 (PAMV…TSWL). At threonine 187 the chain carries FMN phosphoryl threonine. Helical transmembrane passes span 214-234 (VIAG…GVFL), 242-262 (WHIP…GWLL), 267-287 (LVTP…FFIA), and 301-318 (LLYG…RSYG).

The protein belongs to the NqrB/RnfD family. In terms of assembly, the complex is composed of six subunits: RnfA, RnfB, RnfC, RnfD, RnfE and RnfG. Requires FMN as cofactor.

The protein localises to the cell inner membrane. Part of a membrane-bound complex that couples electron transfer with translocation of ions across the membrane. The protein is Ion-translocating oxidoreductase complex subunit D of Erwinia tasmaniensis (strain DSM 17950 / CFBP 7177 / CIP 109463 / NCPPB 4357 / Et1/99).